The chain runs to 99 residues: Large ribosomal subunit protein bL28 (99 aa).

Belongs to the bacterial ribosomal protein bL28 family.

The protein is Large ribosomal subunit protein bL28 of Rhizobium etli (strain CIAT 652).